The primary structure comprises 174 residues: NADH-ubiquinone oxidoreductase chain 6 (174 aa).

The next 6 membrane-spanning stretches (helical) occupy residues 1-21, 24-44, 47-67, 86-106, 111-131, and 151-171; these read MTYA…GFSS, SPIY…AVIL, GGGY…MVVF, VEVL…VLWV, GVVV…EGEG, and WLVV…IEIA.

It belongs to the complex I subunit 6 family. In terms of assembly, core subunit of respiratory chain NADH dehydrogenase (Complex I) which is composed of 45 different subunits.

The protein localises to the mitochondrion inner membrane. It catalyses the reaction a ubiquinone + NADH + 5 H(+)(in) = a ubiquinol + NAD(+) + 4 H(+)(out). Core subunit of the mitochondrial membrane respiratory chain NADH dehydrogenase (Complex I) which catalyzes electron transfer from NADH through the respiratory chain, using ubiquinone as an electron acceptor. Essential for the catalytic activity and assembly of complex I. The protein is NADH-ubiquinone oxidoreductase chain 6 (MT-ND6) of Pongo abelii (Sumatran orangutan).